The primary structure comprises 3969 residues: MAHSCRWRFPARPGTTGGGGGGGRRGLGGAPRQRVPALLLPPGPPVGGGGPGAPPSPPAVAAAAAAAGSSGAGVPGGAAAASAASSSSASSSSSSSSSASSGPALLRVGPGFDAALQVSAAIGTNLRRFRAVFGESGGGGGSGEDEQFLGFGSDEEVRVRSPTRSPSVKTSPRKPRGRPRSGSDRNSAILSDPSVFSPLNKSETKSGDKIKKKDSKSIEKKRGRPPTFPGVKIKITHGKDISELPKGNKEDSLKKIKRTPSATFQQATKIKKLRAGKLSPLKSKFKTGKLQIGRKGVQIVRRRGRPPSTERIKTPSGLLINSELEKPQKVRKDKEGTPPLTKEDKTVVRQSPRRIKPVRIIPSSKRTDATIAKQLLQRAKKGAQKKIEKEAAQLQGRKVKTQVKNIRQFIMPVVSAISSRIIKTPRRFIEDEDYDPPIKIARLESTPNSRFSAPSCGSSEKSSAASQHSSQMSSDSSRSSSPSVDTSTDSQASEEIQVLPEERSDTPEVHPPLPISQSPENESNDRRSRRYSVSERSFGSRTTKKLSTLQSAPQQQTSSSPPPPLLTPPPPLQPASSISDHTPWLMPPTIPLASPFLPASTAPMQGKRKSILREPTFRWTSLKHSRSEPQYFSSAKYAKEGLIRKPIFDNFRPPPLTPEDVGFASGFSASGTAASARLFSPLHSGTRFDMHKRSPLLRAPRFTPSEAHSRIFESVTLPSNRTSAGTSSSGVSNRKRKRKVFSPIRSEPRSPSHSMRTRSGRLSSSELSPLTPPSSVSSSLSISVSPLATSALNPTFTFPSHSLTQSGESAEKNQRPRKQTSAPAEPFSSSSPTPLFPWFTPGSQTERGRNKDKAPEELSKDRDADKSVEKDKSRERDREREKENKRESRKEKRKKGSEIQSSSALYPVGRVSKEKVVGEDVATSSSAKKATGRKKSSSHDSGTDITSVTLGDTTAVKTKILIKKGRGNLEKTNLDLGPTAPSLEKEKTLCLSTPSSSTVKHSTSSIGSMLAQADKLPMTDKRVASLLKKAKAQLCKIEKSKSLKQTDQPKAQGQESDSSETSVRGPRIKHVCRRAAVALGRKRAVFPDDMPTLSALPWEEREKILSSMGNDDKSSIAGSEDAEPLAPPIKPIKPVTRNKAPQEPPVKKGRRSRRCGQCPGCQVPEDCGVCTNCLDKPKFGGRNIKKQCCKMRKCQNLQWMPSKAYLQKQAKAVKKKEKKSKTSEKKDSKESSVVKNVVDSSQKPTPSAREDPAPKKSSSEPPPRKPVEEKSEEGNVSAPGPESKQATTPASRKSSKQVSQPALVIPPQPPTTGPPRKEVPKTTPSEPKKKQPPPPESGPEQSKQKKVAPRPSIPVKQKPKEKEKPPPVNKQENAGTLNILSTLSNGNSSKQKIPADGVHRIRVDFKEDCEAENVWEMGGLGILTSVPITPRVVCFLCASSGHVEFVYCQVCCEPFHKFCLEENERPLEDQLENWCCRRCKFCHVCGRQHQATKQLLECNKCRNSYHPECLGPNYPTKPTKKKKVWICTKCVRCKSCGSTTPGKGWDAQWSHDFSLCHDCAKLFAKGNFCPLCDKCYDDDDYESKMMQCGKCDRWVHSKCENLSDEMYEILSNLPESVAYTCVNCTERHPAEWRLALEKELQISLKQVLTALLNSRTTSHLLRYRQAAKPPDLNPETEESIPSRSSPEGPDPPVLTEVSKQDDQQPLDLEGVKRKMDQGNYTSVLEFSDDIVKIIQAAINSDGGQPEIKKANSMVKSFFIRQMERVFPWFSVKKSRFWEPNKVSSNSGMLPNAVLPPSLDHNYAQWQEREENSHTEQPPLMKKIIPAPKPKGPGEPDSPTPLHPPTPPILSTDRSREDSPELNPPPGIEDNRQCALCLTYGDDSANDAGRLLYIGQNEWTHVNCALWSAEVFEDDDGSLKNVHMAVIRGKQLRCEFCQKPGATVGCCLTSCTSNYHFMCSRAKNCVFLDDKKVYCQRHRDLIKGEVVPENGFEVFRRVFVDFEGISLRRKFLNGLEPENIHMMIGSMTIDCLGILNDLSDCEDKLFPIGYQCSRVYWSTTDARKRCVYTCKIVECRPPVVEPDINSTVEHDENRTIAHSPTSFTESSSKESQNTAEIISPPSPDRPPHSQTSGSCYYHVISKVPRIRTPSYSPTQRSPGCRPLPSAGSPTPTTHEIVTVGDPLLSSGLRSIGSRRHSTSSLSPQRSKLRIMSPMRTGNTYSRNNVSSVSTTGTATDLESSAKVVDHVLGPLNSSTSLGQNTSTSSNLQRTVVTVGNKNSHLDGSSSSEMKQSSASDLVSKSSSLKGEKTKVLSSKSSEGSAHNVAYPGIPKLAPQVHNTTSRELNVSKIGSFAEPSSVSFSSKEALSFPHLHLRGQRNDRDQHTDSTQSANSSPDEDTEVKTLKLSGMSNRSSIINEHMGSSSRDRRQKGKKSCKETFKEKHSSKSFLEPGQVTTGEEGNLKPEFMDEVLTPEYMGQRPCNNVSSDKIGDKGLSMPGVPKAPPMQVEGSAKELQAPRKRTVKVTLTPLKMENESQSKNALKESSPASPLQIESTSPTEPISASENPGDGPVAQPSPNNTSCQDSQSNNYQNLPVQDRNLMLPDGPKPQEDGSFKRRYPRRSARARSNMFFGLTPLYGVRSYGEEDIPFYSSSTGKKRGKRSAEGQVDGADDLSTSDEDDLYYYNFTRTVISSGGEERLASHNLFREEEQCDLPKISQLDGVDDGTESDTSVTATTRKSSQIPKRNGKENGTENLKIDRPEDAGEKEHVTKSSVGHKNEPKMDNCHSVSRVKTQGQDSLEAQLSSLESSRRVHTSTPSDKNLLDTYNTELLKSDSDNNNSDDCGNILPSDIMDFVLKNTPSMQALGESPESSSSELLNLGEGLGLDSNREKDMGLFEVFSQQLPTTEPVDSSVSSSISAEEQFELPLELPSDLSVLTTRSPTVPSQNPSRLAVISDSGEKRVTITEKSVASSESDPALLSPGVDPTPEGHMTPDHFIQGHMDADHISSPPCGSVEQGHGNNQDLTRNSSTPGLQVPVSPTVPIQNQKYVPNSTDSPGPSQISNAAVQTTPPHLKPATEKLIVVNQNMQPLYVLQTLPNGVTQKIQLTSSVSSTPSVMETNTSVLGPMGGGLTLTTGLNPSLPTSQSLFPSASKGLLPMSHHQHLHSFPAATQSSFPPNISNPPSGLLIGVQPPPDPQLLVSESSQRTDLSTTVATPSSGLKKRPISRLQTRKNKKLAPSSTPSNIAPSDVVSNMTLINFTPSQLPNHPSLLDLGSLNTSSHRTVPNIIKRSKSSIMYFEPAPLLPQSVGGTAATAAGTSTISQDTSHLTSGSVSGLASSSSVLNVVSMQTTTTPTSSASVPGHVTLTNPRLLGTPDIGSISNLLIKASQQSLGIQDQPVALPPSSGMFPQLGTSQTPSTAAITAASSICVLPSTQTTGITAASPSGEADEHYQLQHVNQLLASKTGIHSSQRDLDSASGPQVSNFTQTVDAPNSMGLEQNKALSSAVQASPTSPGGSPSSPSSGQRSASPSVPGPTKPKPKTKRFQLPLDKGNGKKHKVSHLRTSSSEAHIPDQETTSLTSGTGTPGAEAEQQDTASVEQSSQKECGQPAGQVAVLPEVQVTQNPANEQESAEPKTVEEEESNFSSPLMLWLQQEQKRKESITEKKPKKGLVFEISSDDGFQICAESIEDAWKSLTDKVQEARSNARLKQLSFAGVNGLRMLGILHDAVVFLIEQLSGAKHCRNYKFRFHKPEEANEPPLNPHGSARAEVHLRKSAFDMFNFLASKHRQPPEYNPNDEEEEEVQLKSARRATSMDLPMPMRFRHLKKTSKEAVGVYRSPIHGRGLFCKRNIDAGEMVIEYAGNVIRSIQTDKREKYYDSKGIGCYMFRIDDSEVVDATMHGNAARFINHSCEPNCYSRVINIDGQKHIVIFAMRKIYRGEELTYDYKFPIEDASNKLPCNCGAKKCRKFLN.

Disordered stretches follow at residues 1–108 (MAHS…LLRV), 132–253 (VFGE…EDSL), and 301–352 (RRRG…RQSP). The short motif at 6–25 (RWRFPARPGTTGGGGGGGRR) is the Menin-binding motif (MBM) element. A compositionally biased stretch (gly residues) spans 15-29 (TTGGGGGGGRRGLGG). Composition is skewed to low complexity over residues 59–69 (AVAAAAAAAGS) and 77–104 (GAAAASAASSSSASSSSSSSSSASSGPA). The Integrase domain-binding motif 1 (IBM1) motif lies at 123–134 (GTNLRRFRAVFG). Phosphoserine; by CK2 occurs at positions 136 and 142. The short motif at 147-152 (QFLGFG) is the Integrase domain-binding motif 2 (IBM2) element. S153 carries the phosphoserine modification. The a.T hook 1 DNA-binding region spans 169-180 (KTSPRKPRGRPR). A Phosphoserine modification is found at S197. 2 stretches are compositionally biased toward basic and acidic residues: residues 202-220 (SETKSGDKIKKKDSKSIEK) and 237-253 (HGKDISELPKGNKEDSL). Residues 217–227 (SIEKKRGRPPT) constitute a DNA-binding region (a.T hook 2). K239 carries the post-translational modification N6-acetyllysine. Positions 301–309 (RRRGRPPST) form a DNA-binding region, a.T hook 3. Over residues 323 to 347 (ELEKPQKVRKDKEGTPPLTKEDKTV) the composition is skewed to basic and acidic residues. K373 carries the post-translational modification N6-acetyllysine. The interval 445 to 585 (STPNSRFSAP…SSISDHTPWL (141 aa)) is disordered. Low complexity predominate over residues 452 to 491 (SAPSCGSSEKSSAASQHSSQMSSDSSRSSSPSVDTSTDSQ). Phosphoserine is present on S518. The span at 546-559 (LSTLQSAPQQQTSS) shows a compositional bias: low complexity. Pro residues predominate over residues 560 to 573 (SPPPPLLTPPPPLQ). An N6-acetyllysine modification is found at K636. Position 680 is a phosphoserine (S680). Disordered regions lie at residues 713 to 780 (ESVT…SSSL), 798 to 949 (FPSH…TSVT), 1038 to 1066 (EKSKSLKQTDQPKAQGQESDSSETSVRGP), and 1106 to 1166 (SSMG…VPED). Residues 716–732 (TLPSNRTSAGTSSSGVS) show a composition bias toward polar residues. Residues 762 to 780 (LSSSELSPLTPPSSVSSSL) show a composition bias toward low complexity. Residues 798–808 (FPSHSLTQSGE) show a composition bias toward polar residues. Over residues 820 to 841 (TSAPAEPFSSSSPTPLFPWFTP) the composition is skewed to low complexity. T840 is modified (phosphothreonine). Residues 846–890 (ERGRNKDKAPEELSKDRDADKSVEKDKSRERDREREKENKRESRK) show a composition bias toward basic and acidic residues. 2 positions are modified to phosphoserine: S926 and S1056. The span at 1043–1062 (LKQTDQPKAQGQESDSSETS) shows a compositional bias: polar residues. An N6-acetyllysine modification is found at K1130. Residues 1147–1195 (KKGRRSRRCGQCPGCQVPEDCGVCTNCLDKPKFGGRNIKKQCCKMRKCQ) form a CXXC-type zinc finger. The Zn(2+) site is built by C1155, C1158, C1161, C1167, C1170, C1173, C1189, and C1194. Residues 1200–1375 (MPSKAYLQKQ…PPVNKQENAG (176 aa)) are disordered. The segment covering 1220–1232 (SKTSEKKDSKESS) has biased composition (basic and acidic residues). Low complexity predominate over residues 1233 to 1243 (VVKNVVDSSQK). The residue at position 1235 (K1235) is an N6-acetyllysine. Residues 1248–1273 (AREDPAPKKSSSEPPPRKPVEEKSEE) are compositionally biased toward basic and acidic residues. Residues 1284-1300 (KQATTPASRKSSKQVSQ) are compositionally biased toward polar residues. A compositionally biased stretch (pro residues) spans 1304–1313 (VIPPQPPTTG). PHD-type zinc fingers lie at residues 1431–1482 (RVVC…CKFC), 1479–1533 (CKFC…CVRC), and 1566–1627 (GNFC…CTER). The segment at 1584-1600 (KMMQCGKCDRWVHSKCE) is interaction with histone H3K4me3. One can recognise a Bromo domain in the interval 1635–1765 (ALEKELQISL…SFFIRQMERV (131 aa)). Disordered regions lie at residues 1663–1713 (YRQA…GVKR) and 1806–1869 (QERE…GIED). A compositionally biased stretch (pro residues) spans 1826 to 1847 (APKPKGPGEPDSPTPLHPPTPP). The residue at position 1837 (S1837) is a Phosphoserine. The residue at position 1845 (T1845) is a Phosphothreonine. S1858 carries the post-translational modification Phosphoserine. The segment at 1870 to 1910 (NRQCALCLTYGDDSANDAGRLLYIGQNEWTHVNCALWSAEV) adopts a C2HC pre-PHD-type zinc-finger fold. Residues 1931–1978 (LRCEFCQKPGATVGCCLTSCTSNYHFMCSRAKNCVFLDDKKVYCQRHR) form a PHD-type 4 zinc finger. Positions 2018-2074 (NIHMMIGSMTIDCLGILNDLSDCEDKLFPIGYQCSRVYWSTTDARKRCVYTCKIVEC) constitute an FYR N-terminal domain. Disordered stretches follow at residues 2081-2133 (PDIN…TSGS), 2145-2232 (IRTP…TTGT), 2275-2333 (NKNS…KLAP), 2373-2460 (RGQR…EGNL), 2475-2618 (GQRP…RYPR), 2647-2675 (FYSSSTGKKRGKRSAEGQVDGADDLSTSD), and 2713-2821 (KISQ…KNLL). Polar residues predominate over residues 2095–2115 (IAHSPTSFTESSSKESQNTAE). S2098 is modified (phosphoserine). T2147 is subject to Phosphothreonine. S2151 and S2201 each carry phosphoserine. Polar residues predominate over residues 2214-2232 (RTGNTYSRNNVSSVSTTGT). Over residues 2283 to 2302 (SSSSEMKQSSASDLVSKSSS) the composition is skewed to low complexity. Composition is skewed to polar residues over residues 2310 to 2319 (VLSSKSSEGS) and 2406 to 2421 (GMSNRSSIINEHMGSS). Basic and acidic residues predominate over residues 2432-2442 (SCKETFKEKHS). Phosphothreonine is present on T2525. A Glycyl lysine isopeptide (Lys-Gly) (interchain with G-Cter in SUMO2) cross-link involves residue K2528. Polar residues-rich tracts occupy residues 2543–2563 (SPASPLQIESTSPTEPISASE) and 2573–2592 (PSPNNTSCQDSQSNNYQNLP). Position 2611 is a phosphoserine (S2611). The segment covering 2726 to 2741 (SDTSVTATTRKSSQIP) has biased composition (polar residues). Basic and acidic residues predominate over residues 2744 to 2782 (NGKENGTENLKIDRPEDAGEKEHVTKSSVGHKNEPKMDN). Polar residues predominate over residues 2784–2795 (HSVSRVKTQGQD). The residue at position 2796 (S2796) is a Phosphoserine. Positions 2796-2805 (SLEAQLSSLE) are enriched in low complexity. The span at 2812-2821 (TSTPSDKNLL) shows a compositional bias: polar residues. The 9aaTAD signature appears at 2847–2855 (SDIMDFVLK). S2955 bears the Phosphoserine mark. Residue K2958 is modified to N6-acetyllysine. Disordered regions lie at residues 2961–3064 (TITE…NAAV) and 3166–3244 (PAAT…SNIA). Composition is skewed to polar residues over residues 2963–2972 (TEKSVASSES) and 3016–3030 (HGNNQDLTRNSSTPG). S3036 carries the phosphoserine modification. Polar residues predominate over residues 3039–3064 (VPIQNQKYVPNSTDSPGPSQISNAAV). Over residues 3171-3182 (SSFPPNISNPPS) the composition is skewed to low complexity. The span at 3198–3216 (VSESSQRTDLSTTVATPSS) shows a compositional bias: polar residues. Residues 3218 to 3233 (LKKRPISRLQTRKNKK) are compositionally biased toward basic residues. Phosphothreonine is present on T3372. Residue K3462 is modified to N6-acetyllysine. Disordered regions lie at residues 3464–3608 (GIHS…GQPA) and 3620–3643 (TQNPANEQESAEPKTVEEEESNFS). Over residues 3476–3489 (SGPQVSNFTQTVDA) the composition is skewed to polar residues. Low complexity predominate over residues 3508 to 3529 (SPTSPGGSPSSPSSGQRSASPS). Phosphoserine is present on residues S3511, S3515, and S3527. A compositionally biased stretch (polar residues) spans 3591–3603 (QDTASVEQSSQKE). The FYR C-terminal domain maps to 3666-3747 (KKGLVFEISS…KHCRNYKFRF (82 aa)). The short motif at 3762-3767 (GSARAE) is the WDR5 interaction motif (WIN) element. The segment at 3785-3808 (HRQPPEYNPNDEEEEEVQLKSARR) is disordered. Positions 3829–3945 (EAVGVYRSPI…RGEELTYDYK (117 aa)) constitute an SET domain. Residues H3839 and R3841 each contribute to the S-adenosyl-L-methionine site. The residue at position 3882 (C3882) is an S-methylcysteine; by autocatalysis. S-adenosyl-L-methionine-binding positions include Y3883 and 3906-3907 (NH). C3909 and C3957 together coordinate Zn(2+). Residues 3953 to 3969 (NKLPCNCGAKKCRKFLN) enclose the Post-SET domain. N3958 contributes to the S-adenosyl-L-methionine binding site. Zn(2+) contacts are provided by C3959 and C3964.

The protein belongs to the class V-like SAM-binding methyltransferase superfamily. Histone-lysine methyltransferase family. TRX/MLL subfamily. As to quaternary structure, MLL cleavage product N320 heterodimerizes with MLL cleavage product C180 (via SET and FYRC domains). Component of some MLL1/MLL complex, at least composed of the core components KMT2A/MLL1, ASH2L, HCFC1/HCF1, HCFC2, WDR5, DPY30 and RBBP5, as well as the facultative components BACC1, CHD8, E2F6, HSP70, INO80C, KANSL1, LAS1L, MAX, MCRS1, MEN1, MGA, KAT8/MOF, PELP1, PHF20, PRP31, RING2, RUVB1/TIP49A, RUVB2/TIP49B, SENP3, TAF1, TAF4, TAF6, TAF7, TAF9 and TEX10. Forms a core complex with the evolutionary conserved subcomplex WRAD composed of WDR5, RBBP5, ASH2L/ASH2 and DPY30 subunits; WRAD differentially stimulates the methyltransferase activity. Interacts (via WIN motif) with WDR5; the interaction is direct. Interaction with WDR5 is required for stable interaction with ASH2L and RBBP5, and thereby also for optimal histone methyltransferase activity. Interacts with KAT8/MOF; the interaction is direct. Interacts with SBF1 and PPP1R15A. Interacts with ZNF335. Interacts with CLOCK and BMAL1 in a circadian manner. Interacts with PPIE; this results in decreased histone H3 methyltransferase activity. Interacts with CREBBP. Interacts with the WRAD complex composed of WDR5, RBBP5, ASH2L and DPY30. Interacts (via MBM motif) with MEN1. Interacts (via IBM motifs) with PSIP1 (via IBD domain) with moderate affinity whereas the KMT2A-MEN1 complex interacts with a greater affinity; MEN1 enhances interaction of KMT2A with PSIP1. Phosphorylation increases its affinity for PSIP1. Forms a complex with CREBBP and CREB1. In terms of assembly, (Microbial infection) Interacts with herpes virus 8/HHV-8 protein LANA1; this interaction regulates the MLL1 histone methyltransferase activity on viral DNA. Proteolytic cleavage by TASP1 generates MLL cleavage product N320 and MLL cleavage product C180, which reassemble through a non-covalent association. 2 cleavage sites exist, cleavage site 1 (CS1) and cleavage site 2 (CS2), to generate MLL cleavage products N320 and C180. CS2 is the major site. Post-translationally, phosphorylation increases its interaction with PSIP1. In terms of processing, auto-methylated at Cys-3882: auto-methylation is inhibited by the WRAD complex and unmodified histone H3. In terms of tissue distribution, heart, lung, brain and T- and B-lymphocytes.

The protein resides in the nucleus. It catalyses the reaction L-lysyl(4)-[histone H3] + S-adenosyl-L-methionine = N(6)-methyl-L-lysyl(4)-[histone H3] + S-adenosyl-L-homocysteine + H(+). It carries out the reaction N(6)-methyl-L-lysyl(4)-[histone H3] + S-adenosyl-L-methionine = N(6),N(6)-dimethyl-L-lysyl(4)-[histone H3] + S-adenosyl-L-homocysteine + H(+). The enzyme catalyses L-cysteinyl-[protein] + S-adenosyl-L-methionine = S-methyl-L-cysteinyl-[protein] + S-adenosyl-L-homocysteine + H(+). Its function is as follows. Histone methyltransferase that plays an essential role in early development and hematopoiesis. Catalytic subunit of the MLL1/MLL complex, a multiprotein complex that mediates both methylation of 'Lys-4' of histone H3 (H3K4me) complex and acetylation of 'Lys-16' of histone H4 (H4K16ac). Catalyzes methyl group transfer from S-adenosyl-L-methionine to the epsilon-amino group of 'Lys-4' of histone H3 (H3K4) via a non-processive mechanism. Part of chromatin remodeling machinery predominantly forms H3K4me1 and H3K4me2 methylation marks at active chromatin sites where transcription and DNA repair take place. Has weak methyltransferase activity by itself, and requires other component of the MLL1/MLL complex to obtain full methyltransferase activity. Has no activity toward histone H3 phosphorylated on 'Thr-3', less activity toward H3 dimethylated on 'Arg-8' or 'Lys-9', while it has higher activity toward H3 acetylated on 'Lys-9'. Binds to unmethylated CpG elements in the promoter of target genes and helps maintain them in the nonmethylated state. Required for transcriptional activation of HOXA9. Promotes PPP1R15A-induced apoptosis. Plays a critical role in the control of circadian gene expression and is essential for the transcriptional activation mediated by the CLOCK-BMAL1 heterodimer. Establishes a permissive chromatin state for circadian transcription by mediating a rhythmic methylation of 'Lys-4' of histone H3 (H3K4me) and this histone modification directs the circadian acetylation at H3K9 and H3K14 allowing the recruitment of CLOCK-BMAL1 to chromatin. Also has auto-methylation activity on Cys-3882 in absence of histone H3 substrate. The sequence is that of Histone-lysine N-methyltransferase 2A (KMT2A) from Homo sapiens (Human).